The chain runs to 402 residues: Acetylornithine aminotransferase (402 aa).

Residues 106-107 and Phe-132 contribute to the pyridoxal 5'-phosphate site; that span reads GA. Arg-135 lines the N(2)-acetyl-L-ornithine pocket. 217-220 serves as a coordination point for pyridoxal 5'-phosphate; sequence DEVQ. Lys-247 carries the N6-(pyridoxal phosphate)lysine modification. Thr-275 contacts N(2)-acetyl-L-ornithine. Residue Thr-276 participates in pyridoxal 5'-phosphate binding.

Belongs to the class-III pyridoxal-phosphate-dependent aminotransferase family. ArgD subfamily. In terms of assembly, homodimer. Pyridoxal 5'-phosphate is required as a cofactor.

It localises to the cytoplasm. The catalysed reaction is N(2)-acetyl-L-ornithine + 2-oxoglutarate = N-acetyl-L-glutamate 5-semialdehyde + L-glutamate. Its pathway is amino-acid biosynthesis; L-arginine biosynthesis; N(2)-acetyl-L-ornithine from L-glutamate: step 4/4. This Streptomyces coelicolor (strain ATCC BAA-471 / A3(2) / M145) protein is Acetylornithine aminotransferase.